The following is a 322-amino-acid chain: Cytochrome c biogenesis protein CcsA (322 aa).

Transmembrane regions (helical) follow at residues 9 to 29 (ILTH…LITL), 44 to 64 (GMIT…IFLG), 71 to 91 (LYES…VPYF), 97 to 117 (FLSA…TSGL), 143 to 163 (MILG…FLVI), 225 to 245 (IISI…VWAN), 254 to 274 (WDPK…YFHI), and 286 to 306 (AIVA…VNLL).

It belongs to the CcmF/CycK/Ccl1/NrfE/CcsA family. In terms of assembly, may interact with Ccs1.

The protein localises to the plastid. It is found in the chloroplast thylakoid membrane. Required during biogenesis of c-type cytochromes (cytochrome c6 and cytochrome f) at the step of heme attachment. The chain is Cytochrome c biogenesis protein CcsA from Manihot esculenta (Cassava).